The sequence spans 593 residues: ATP-dependent lipid A-core flippase (593 aa).

6 helical membrane-spanning segments follow: residues 33–53 (IGIV…EAGI), 75–95 (WYVP…QYTS), 137–157 (AIVF…VTLV), 164–184 (IFLL…VAVI), 262–282 (QPLT…IAVV), and 292–312 (GGFV…KHLI). The ABC transmembrane type-1 domain maps to 37 to 320 (VLAVVTMGVV…LIDVNQPLQR (284 aa)). One can recognise an ABC transporter domain in the interval 352–586 (IEFRAVSFDY…GGLYAHLHRI (235 aa)). ATP is bound at residue 386-393 (GPSGSGKT).

The protein belongs to the ABC transporter superfamily. Lipid exporter (TC 3.A.1.106) family. As to quaternary structure, homodimer.

The protein resides in the cell inner membrane. The catalysed reaction is ATP + H2O + lipid A-core oligosaccharideSide 1 = ADP + phosphate + lipid A-core oligosaccharideSide 2.. In terms of biological role, involved in lipopolysaccharide (LPS) biosynthesis. Translocates lipid A-core from the inner to the outer leaflet of the inner membrane. Transmembrane domains (TMD) form a pore in the inner membrane and the ATP-binding domain (NBD) is responsible for energy generation. The chain is ATP-dependent lipid A-core flippase from Burkholderia orbicola (strain AU 1054).